The chain runs to 495 residues: Cobyric acid synthase (495 aa).

The GATase cobBQ-type domain maps to 252 to 439; sequence RIRIAAPMLS…VHGLFAQDAF (188 aa). The active-site Nucleophile is the Cys334. His431 is a catalytic residue.

It belongs to the CobB/CobQ family. CobQ subfamily.

The protein operates within cofactor biosynthesis; adenosylcobalamin biosynthesis. Its function is as follows. Catalyzes amidations at positions B, D, E, and G on adenosylcobyrinic A,C-diamide. NH(2) groups are provided by glutamine, and one molecule of ATP is hydrogenolyzed for each amidation. This chain is Cobyric acid synthase, found in Hyphomonas neptunium (strain ATCC 15444).